Reading from the N-terminus, the 600-residue chain is Rhesus-like glycoprotein B (600 aa).

The Cytoplasmic segment spans residues 1–16 (MSKDEHKLPLSKRKES). Residues 17–37 (IIFMMILFAFQVFMVVLFSVW) traverse the membrane as a helical segment. At 38–73 (VRYSKNEVNYSTLTPEQLQELEATGGVVQEEVTNIY) the chain is on the extracellular side. An N-linked (GlcNAc...) asparagine glycan is attached at Asn-46. Residues 74–94 (GYFRDINIMIFFGFGFLMTFL) form a helical membrane-spanning segment. Residues 95–102 (RRYGYSAL) are Cytoplasmic-facing. A helical membrane pass occupies residues 103–123 (GYTFIISALVAQWSVLIYGFF). Residues 124–145 (ETVDHKNDHGGDYASTFEMSQT) lie on the Extracellular side of the membrane. Residues 146–166 (VLLQGLFCAGAVMISYGAVLG) form a helical membrane-spanning segment. Residues 167 to 170 (RVTP) lie on the Cytoplasmic side of the membrane. Residues 171–191 (LQMLVVGIFEPIFYFLNMFIG) form a helical membrane-spanning segment. The Extracellular portion of the chain corresponds to 192-199 (EMNLEAID). A helical membrane pass occupies residues 200–220 (VGGGMYIHLFGSVFGLTIAWF). Topologically, residues 221-240 (LTDKKSKDCEDNSPSYTGDY) are cytoplasmic. The helical transmembrane segment at 241–261 (FAMAGTLFLWMMWPSFNAAIA) threads the bilayer. Over 262–274 (PLGEPQFRAIANT) the chain is Extracellular. A helical membrane pass occupies residues 275–295 (FLSLTASTIATFIVTRLFGHL). The Cytoplasmic segment spans residues 296–303 (GHKIDMVH). A helical transmembrane segment spans residues 304–323 (VQNSSLAGGVVQGCLAHMNI). Residues 324-325 (NP) are Extracellular-facing. The helical transmembrane segment at 326 to 346 (GGAIGMGFLAGVISVIGYLFI) threads the bilayer. Residues 347–361 (SPFLQRRFNIQDTCG) are Cytoplasmic-facing. A helical transmembrane segment spans residues 362–382 (IHNLHFMPGFIGSIAACIAAW). Residues 383–411 (KGLNDRSLYNPIEFNQIFRAGEDQARNNA) are Extracellular-facing. The chain crosses the membrane as a helical span at residues 412 to 432 (AATFISIGIAIAGGLFVGMIL). Residues 433-600 (KALKKVGGLK…SSTNSPTSKV (168 aa)) are Cytoplasmic-facing. The interval 471–600 (NLPMPTTDNG…SSTNSPTSKV (130 aa)) is disordered. Over residues 498 to 510 (NKKENGYRRDLIR) the composition is skewed to basic and acidic residues. A compositionally biased stretch (low complexity) spans 519-529 (EQSTDSSYSDS). Residues 540 to 554 (RIRKLAKKSYRRSKK) are compositionally biased toward basic residues. Positions 555 to 566 (SHSEHQPQHQPE) are enriched in basic and acidic residues. Residues 571–580 (NNNNNNNNNN) show a composition bias toward low complexity. Positions 581–600 (ATAETTDNGGSSTNSPTSKV) are enriched in polar residues.

It belongs to the ammonium transporter (TC 2.A.49) family. Rh subfamily.

The protein resides in the membrane. In terms of biological role, may be a carbon dioxide/bicarbonate transporter. This Dictyostelium discoideum (Social amoeba) protein is Rhesus-like glycoprotein B (rhgB).